A 292-amino-acid chain; its full sequence is MKRILLFVLTNLAVVLVLGVVASLLGVNHYLTGNGLNLGALLGFALVMGFGGAFISLLISKPMAKWSAGVRVIDGSGSPDERWIVETVRKLASQAGIGMPEVGIFDGAPNAFATGAFKNSALVAVSTGLLQGMTREEVEAVIGHEVAHIANGDMVTMTLIQGVMNTFVVFLSRVIGYAVDSALRKNNDSQTGPGMGYYVTTIVLDIALGFVAAIIVAWFSRQREFRADAGAARLMGRRQPMIAALARLGGMQPAQLPKSMAALGIAGGIGQWFSTHPPLEARIAALQNAHQD.

The next 2 membrane-spanning stretches (helical) occupy residues 4 to 24 (ILLF…VASL) and 39 to 59 (GALL…SLLI). Histidine 144 contributes to the Zn(2+) binding site. Glutamate 145 is a catalytic residue. Residue histidine 148 participates in Zn(2+) binding. 2 consecutive transmembrane segments (helical) span residues 159–179 (LIQG…GYAV) and 199–219 (VTTI…VAWF). Glutamate 224 lines the Zn(2+) pocket.

The protein belongs to the peptidase M48B family. Zn(2+) is required as a cofactor.

It localises to the cell inner membrane. The polypeptide is Protease HtpX homolog (Verminephrobacter eiseniae (strain EF01-2)).